The sequence spans 433 residues: GTPase Obg (433 aa).

The 159-residue stretch at 1–159 (MAITDYCECR…LNVSLEVKYL (159 aa)) folds into the Obg domain. Residues 160-329 (ANVGIVGFPN…LLDRVFELYN (170 aa)) form the OBG-type G domain. Residues 166-173 (GFPNSGKS), 191-195 (FTTLI), 212-215 (DIPG), 282-285 (NKID), and 310-312 (ISA) contribute to the GTP site. Mg(2+) is bound by residues serine 173 and threonine 193. One can recognise an OCT domain in the interval 355–433 (TNENNNDPLN…FDGCEFVIND (79 aa)).

The protein belongs to the TRAFAC class OBG-HflX-like GTPase superfamily. OBG GTPase family. In terms of assembly, monomer. Mg(2+) is required as a cofactor.

The protein localises to the cytoplasm. Functionally, an essential GTPase which binds GTP, GDP and possibly (p)ppGpp with moderate affinity, with high nucleotide exchange rates and a fairly low GTP hydrolysis rate. Plays a role in control of the cell cycle, stress response, ribosome biogenesis and in those bacteria that undergo differentiation, in morphogenesis control. The polypeptide is GTPase Obg (Mycoplasma genitalium (strain ATCC 33530 / DSM 19775 / NCTC 10195 / G37) (Mycoplasmoides genitalium)).